The chain runs to 801 residues: Glycerol-3-phosphate acyltransferase 2, mitochondrial (801 aa).

A disordered region spans residues 1–24 (METMLKSNPQMQQRNNHSGQETSL). Over 1–305 (METMLKSNPQ…PGPRLSALGQ (305 aa)) the chain is Cytoplasmic. The interval 180-290 (QLHKGQMKMV…SGQPLLIFLE (111 aa)) is acyltransferase. The HXXXXD motif motif lies at 205 to 210 (HKSLLD). A helical transmembrane segment spans residues 306 to 332 (AWLGLVVQAVQAGIVPDATLVPVATAY). Topologically, residues 333–449 (DLVPDAPCNM…QLLVRRLSRH (117 aa)) are mitochondrial intermembrane. The helical transmembrane segment at 450 to 472 (VLSASVASSAVMSTAIMATLLLL) threads the bilayer. Topologically, residues 473–795 (KHQKGVVLSQ…DNQDKLEQFI (323 aa)) are cytoplasmic.

Belongs to the GPAT/DAPAT family. In terms of assembly, interacts with PIWIL2. Expressed in spermatocytes and spermatides.

It is found in the mitochondrion outer membrane. It carries out the reaction sn-glycerol 3-phosphate + an acyl-CoA = a 1-acyl-sn-glycero-3-phosphate + CoA. The catalysed reaction is a 1-acyl-sn-glycero-3-phosphate + an acyl-CoA = a 1,2-diacyl-sn-glycero-3-phosphate + CoA. It catalyses the reaction 1-(9Z-octadecenoyl)-sn-glycero-3-phosphate + (9Z)-octadecenoyl-CoA = 1,2-di-(9Z-octadecenoyl)-sn-glycero-3-phosphate + CoA. The enzyme catalyses 1-(9Z-octadecenoyl)-sn-glycero-3-phosphate + (5Z,8Z,11Z,14Z)-eicosatetraenoyl-CoA = 1-(9Z)-octadecenoyl-2-(5Z,8Z,11Z,14Z)-eicosatetraenoyl-sn-glycero-3-phosphate + CoA. It carries out the reaction (5Z,8Z,11Z,14Z)-eicosatetraenoyl-CoA + sn-glycerol 3-phosphate = 1-(5Z,8Z,11Z,14Z-eicosatetraenoyl)-sn-glycero-3-phosphate + CoA. Its pathway is phospholipid metabolism; CDP-diacylglycerol biosynthesis; CDP-diacylglycerol from sn-glycerol 3-phosphate: step 1/3. Inhibited by N-ethylmaleimide (NEM). In terms of biological role, transfers an acyl-group from acyl-ACP to the sn-1 position of glycerol-3-phosphate producing a lysophosphatidic acid (LPA), an essential step for the triacylglycerol (TAG) and glycerophospholipids. In vitro also transfers an acyl-group from acyl-ACP to the LPA producing a phosphatidic acid (PA). Prefers arachidonoyl-CoA as the acyl donor. Required for primary processing step during piRNA biosynthesis. Molecular mechanisms by which it promotes piRNA biosynthesis are unclear and do not involve its acyltransferase activity. In Rattus norvegicus (Rat), this protein is Glycerol-3-phosphate acyltransferase 2, mitochondrial.